Reading from the N-terminus, the 619-residue chain is Probable serine/threonine-protein kinase WNK8 (619 aa).

Basic and acidic residues predominate over residues 1–14 (MSGARRCGDRRSER). Residues 1–30 (MSGARRCGDRRSERSSVVGDNRNGYVETDP) form a disordered region. Residues 35-291 (GRLSEVLGKG…AEELLLDPFL (257 aa)) form the Protein kinase domain. ATP-binding positions include 115–118 (TELF) and Lys-163. Asp-180 serves as the catalytic Proton acceptor. Disordered regions lie at residues 293-335 (PPQN…AKTT), 419-464 (YADD…PGPH), 508-555 (CSAS…SMVD), and 585-619 (GFRD…HYMF). Over residues 419 to 428 (YADDDDDDDV) the composition is skewed to acidic residues. Positions 439–448 (SSSPTSSQGS) are enriched in low complexity. A compositionally biased stretch (basic residues) spans 602–619 (QHRRRSSSKVDHKHHYMF).

This sequence belongs to the protein kinase superfamily. Ser/Thr protein kinase family. WNK subfamily.

The enzyme catalyses L-seryl-[protein] + ATP = O-phospho-L-seryl-[protein] + ADP + H(+). It carries out the reaction L-threonyl-[protein] + ATP = O-phospho-L-threonyl-[protein] + ADP + H(+). In Oryza sativa subsp. japonica (Rice), this protein is Probable serine/threonine-protein kinase WNK8 (WNK8).